Reading from the N-terminus, the 340-residue chain is Nuclear transcription factor Y subunit A-3 (340 aa).

The disordered stretch occupies residues 43 to 116 (SLSLKVDSRP…KGFASNPKQG (74 aa)). Residues 60–77 (QISFQDQDSSSTQSTGQS) show a composition bias toward low complexity. Positions 78 to 103 (YTEVASSGDDNPSRQISFSAKSGSEI) are enriched in polar residues. A Subunit association domain (SAD) motif is present at residues 182–205 (FVNAKQYHAIMRRRQQRAKLEAQN). The NFYA/HAP2-type DNA-binding region spans 212–237 (KPYLHESRHVHALKRPRGSGGRFLNT).

This sequence belongs to the NFYA/HAP2 subunit family. In terms of assembly, heterotrimeric transcription factor composed of three components, NF-YA, NF-YB and NF-YC. NF-YB and NF-YC must interact and dimerize for NF-YA association and DNA binding. As to expression, ubiquitous.

The protein localises to the nucleus. In terms of biological role, stimulates the transcription of various genes by recognizing and binding to a CCAAT motif in promoters. The protein is Nuclear transcription factor Y subunit A-3 (NFYA3) of Arabidopsis thaliana (Mouse-ear cress).